Consider the following 616-residue polypeptide: Chaperone protein HscA homolog (616 aa).

This sequence belongs to the heat shock protein 70 family.

Functionally, chaperone involved in the maturation of iron-sulfur cluster-containing proteins. Has a low intrinsic ATPase activity which is markedly stimulated by HscB. The polypeptide is Chaperone protein HscA homolog (Aliivibrio fischeri (strain ATCC 700601 / ES114) (Vibrio fischeri)).